Reading from the N-terminus, the 408-residue chain is Imidazolonepropionase (408 aa).

Fe(3+) is bound by residues H73 and H75. 2 residues coordinate Zn(2+): H73 and H75. 4-imidazolone-5-propanoate contacts are provided by R82, Y145, and H178. Y145 lines the N-formimidoyl-L-glutamate pocket. Residue H243 coordinates Fe(3+). Residue H243 participates in Zn(2+) binding. A 4-imidazolone-5-propanoate-binding site is contributed by Q246. Fe(3+) is bound at residue D318. D318 is a Zn(2+) binding site. N320 and G322 together coordinate N-formimidoyl-L-glutamate. A 4-imidazolone-5-propanoate-binding site is contributed by S323.

It belongs to the metallo-dependent hydrolases superfamily. HutI family. Zn(2+) is required as a cofactor. It depends on Fe(3+) as a cofactor.

Its subcellular location is the cytoplasm. The enzyme catalyses 4-imidazolone-5-propanoate + H2O = N-formimidoyl-L-glutamate. It participates in amino-acid degradation; L-histidine degradation into L-glutamate; N-formimidoyl-L-glutamate from L-histidine: step 3/3. In terms of biological role, catalyzes the hydrolytic cleavage of the carbon-nitrogen bond in imidazolone-5-propanoate to yield N-formimidoyl-L-glutamate. It is the third step in the universal histidine degradation pathway. The protein is Imidazolonepropionase of Shewanella piezotolerans (strain WP3 / JCM 13877).